The primary structure comprises 1171 residues: 7,8-linoleate diol synthase (1171 aa).

Positions 1 to 22 (MASSSSSGSSTRSSSPSDPPSS) are enriched in low complexity. Positions 1 to 56 (MASSSSSGSSTRSSSPSDPPSSFFQKLGAFLGLFSKPQPPRPDYPHAPGNSAREEQ) are disordered. A fatty acid alpha-dioxygenase region spans residues 114 to 457 (TDGLITGLWE…DGSFEDEGLI (344 aa)). Histidine 213 provides a ligand contact to heme b. Residues aspartate 214, serine 229, tyrosine 231, aspartate 233, and serine 235 each contribute to the Ca(2+) site. Tyrosine 385 is an active-site residue. Histidine 388 serves as a coordination point for heme b. The epoxy alcohol synthase stretch occupies residues 675-1171 (KILNNQKDFK…PMNMKIRWDD (497 aa)). The segment at 873–900 (GLANGGANGHANGNANGHTNGNGIHQNG) is disordered. The span at 881 to 895 (GHANGNANGHTNGNG) shows a compositional bias: low complexity. Cysteine 1089 is a binding site for heme.

It in the N-terminal section; belongs to the peroxidase family. In the C-terminal section; belongs to the cytochrome P450 family. In terms of assembly, homotetramer. It depends on heme b as a cofactor. Ca(2+) is required as a cofactor. Heme serves as cofactor.

The enzyme catalyses (9Z,12Z)-octadecadienoate + O2 = (8R,9Z,12Z)-8-hydroperoxyoctadeca-9,12-dienoate. It catalyses the reaction (8R,9Z,12Z)-8-hydroperoxyoctadeca-9,12-dienoate = (7S,8S,9Z,12Z)-7,8-dihydroxyoctadeca-9,12-dienoate. 7,8-linoleate diol synthase is a bifunctional enzyme that converts linoleic acid (18:2n-6) into 8-hydroperoxy-8(E),12(Z)-octadecadienoic acid (8-HPODE) and then catalyzes the isomerization of the resulting hydroperoxide to 7,8-dihydroxy-9(Z),12(Z)-octadecadienoic acid (7,8-DiHODE). This is 7,8-linoleate diol synthase from Pyricularia oryzae (strain 70-15 / ATCC MYA-4617 / FGSC 8958) (Rice blast fungus).